A 55-amino-acid polypeptide reads, in one-letter code: Large ribosomal subunit protein bL33 (55 aa).

It belongs to the bacterial ribosomal protein bL33 family.

This chain is Large ribosomal subunit protein bL33, found in Vibrio atlanticus (strain LGP32) (Vibrio splendidus (strain Mel32)).